A 116-amino-acid polypeptide reads, in one-letter code: Large ribosomal subunit protein bL19 (116 aa).

Belongs to the bacterial ribosomal protein bL19 family.

This protein is located at the 30S-50S ribosomal subunit interface and may play a role in the structure and function of the aminoacyl-tRNA binding site. The protein is Large ribosomal subunit protein bL19 of Syntrophomonas wolfei subsp. wolfei (strain DSM 2245B / Goettingen).